The following is a 150-amino-acid chain: Urease accessory protein UreE (150 aa).

This sequence belongs to the UreE family.

It is found in the cytoplasm. In terms of biological role, involved in urease metallocenter assembly. Binds nickel. Probably functions as a nickel donor during metallocenter assembly. In Staphylococcus carnosus (strain TM300), this protein is Urease accessory protein UreE.